The following is a 351-amino-acid chain: GTPase Obg (351 aa).

Residues 1–159 (MKFLDQAKVY…RWIWLRLKLI (159 aa)) form the Obg domain. The OBG-type G domain maps to 160 to 328 (ADVGLVGLPN…LCGSAWDIVL (169 aa)). GTP-binding positions include 166-173 (GLPNAGKS), 191-195 (FTTLY), 213-216 (DIPG), 280-283 (NKID), and 309-311 (SGV). The Mg(2+) site is built by S173 and T193.

The protein belongs to the TRAFAC class OBG-HflX-like GTPase superfamily. OBG GTPase family. In terms of assembly, monomer. Mg(2+) is required as a cofactor.

It is found in the cytoplasm. Functionally, an essential GTPase which binds GTP, GDP and possibly (p)ppGpp with moderate affinity, with high nucleotide exchange rates and a fairly low GTP hydrolysis rate. Plays a role in control of the cell cycle, stress response, ribosome biogenesis and in those bacteria that undergo differentiation, in morphogenesis control. The sequence is that of GTPase Obg from Maricaulis maris (strain MCS10) (Caulobacter maris).